The following is a 417-amino-acid chain: Serine hydroxymethyltransferase (417 aa).

(6S)-5,6,7,8-tetrahydrofolate contacts are provided by residues L121 and 125–127; that span reads GHL. An N6-(pyridoxal phosphate)lysine modification is found at K229. Residue 355–357 participates in (6S)-5,6,7,8-tetrahydrofolate binding; that stretch reads SPF.

Belongs to the SHMT family. As to quaternary structure, homodimer. Pyridoxal 5'-phosphate serves as cofactor.

The protein resides in the cytoplasm. The enzyme catalyses (6R)-5,10-methylene-5,6,7,8-tetrahydrofolate + glycine + H2O = (6S)-5,6,7,8-tetrahydrofolate + L-serine. Its pathway is one-carbon metabolism; tetrahydrofolate interconversion. It functions in the pathway amino-acid biosynthesis; glycine biosynthesis; glycine from L-serine: step 1/1. Catalyzes the reversible interconversion of serine and glycine with tetrahydrofolate (THF) serving as the one-carbon carrier. This reaction serves as the major source of one-carbon groups required for the biosynthesis of purines, thymidylate, methionine, and other important biomolecules. Also exhibits THF-independent aldolase activity toward beta-hydroxyamino acids, producing glycine and aldehydes, via a retro-aldol mechanism. In Sodalis glossinidius (strain morsitans), this protein is Serine hydroxymethyltransferase.